Reading from the N-terminus, the 267-residue chain is MGGPDPDVPDLDVPDPALLRQGYRAGRLEPEHLAPTWVEQFAAWFIDAATPGVGVPEANAAVFATASAAGRPSARTVLLKGFDQRGFVIYTNYASRKGREATENPFGSLVFPWYALERQVVVIGSIERVSRAETERYFQSRPHGSQLGAWASHQSTIIESRTVLDDRAAELAARWPEGTRVPTPEFWGGLRIVPDTVEFWQGRADRLHDRLRYRRVSVPADGGGTDSLAVADPDATGVRVGDAGGGDAGGGVPTAAEDLWVVERLAP.

Substrate is bound by residues 20-23 (RQGY) and Lys80. FMN-binding positions include 75–80 (RTVLLK), 90–91 (YT), Arg96, Lys97, and Gln119. Residues Tyr137, Arg141, and Ser145 each coordinate substrate. Residues 154-155 (QS) and Trp200 each bind FMN. Position 206–208 (206–208 (RLH)) interacts with substrate. Arg210 is an FMN binding site.

This sequence belongs to the pyridoxamine 5'-phosphate oxidase family. In terms of assembly, homodimer. Requires FMN as cofactor.

It carries out the reaction pyridoxamine 5'-phosphate + O2 + H2O = pyridoxal 5'-phosphate + H2O2 + NH4(+). It catalyses the reaction pyridoxine 5'-phosphate + O2 = pyridoxal 5'-phosphate + H2O2. It functions in the pathway cofactor metabolism; pyridoxal 5'-phosphate salvage; pyridoxal 5'-phosphate from pyridoxamine 5'-phosphate: step 1/1. It participates in cofactor metabolism; pyridoxal 5'-phosphate salvage; pyridoxal 5'-phosphate from pyridoxine 5'-phosphate: step 1/1. Catalyzes the oxidation of either pyridoxine 5'-phosphate (PNP) or pyridoxamine 5'-phosphate (PMP) into pyridoxal 5'-phosphate (PLP). This chain is Pyridoxine/pyridoxamine 5'-phosphate oxidase, found in Frankia casuarinae (strain DSM 45818 / CECT 9043 / HFP020203 / CcI3).